The sequence spans 522 residues: Exo-alpha-(1-&gt;6)-L-arabinofuranosidase (522 aa).

Residues glutamate 39, asparagine 84, and asparagine 185 each coordinate alpha-L-arabinofuranose. The active-site Proton donor/acceptor is glutamate 186. Tyrosine 257, glutamate 310, and glutamine 370 together coordinate alpha-L-arabinofuranose. The active-site Nucleophile is glutamate 310.

Belongs to the glycosyl hydrolase 51 family. In terms of assembly, homohexamer; trimer of dimers.

It carries out the reaction Hydrolysis of terminal non-reducing alpha-L-arabinofuranoside residues in alpha-L-arabinosides.. It catalyses the reaction (20S)-ginsenoside Rc + H2O = L-arabinofuranose + (20S)-ginsenoside Rd. Its activity is regulated as follows. Completely inhibited by Cu(2+) and partially inhibited by Co(2+) and Ba(2+). Catalyzes the hydrolysis of p-nitrophenyl-alpha-L-arabinofuranoside (pNP-alphaL-Af) and the hydrolysis of the terminal alpha-L-arabinofuranoside at the C20 position of ginsenoside Rc to produce ginsenoside Rd. Cannot hydrolyze p-nitrophenyl-alpha-L-arabinopyranoside (pNP-alphaL-Ap) and ginsenoside Rb2. The chain is Exo-alpha-(1-&gt;6)-L-arabinofuranosidase from Bifidobacterium longum.